The sequence spans 44 residues: Phycoerythrin alpha-1 chain (44 aa).

The segment at 1 to 44 (AMDKSAKAPQITIFDHRGCSRAPKSETGGTATKDDQMMVKVSQV) is disordered. Residue Lys4 is modified to 5-hydroxylysine. Residues Cys19 and Arg21 each contribute to the 15,16-dihydrobiliverdin site. A 15,16-dihydrobiliverdin chromophore region spans residues 24–26 (KSE). Lys40 provides a ligand contact to 15,16-dihydrobiliverdin.

This sequence belongs to the phycoerythrin family. In terms of assembly, heterotetramer of 2 different alpha chains and 2 identical beta chains. The subunit composition could comprise of any combination of 2 out of 4 different alpha units with an invariant beta unit. Post-translationally, contains one covalently linked 15,16-dihydrobiliverdin chromophore.

The protein localises to the plastid. It localises to the chloroplast thylakoid membrane. In terms of biological role, light-harvesting photosynthetic tetrapyrrole chromophore-protein from the phycobiliprotein complex. This is Phycoerythrin alpha-1 chain (cpeA1) from Rhodomonas sp. (strain CS 24) (Chroomonas sp. (strain CS24)).